We begin with the raw amino-acid sequence, 407 residues long: 4-hydroxy-3-methylbut-2-en-1-yl diphosphate synthase (ferredoxin) (407 aa).

[4Fe-4S] cluster is bound by residues cysteine 316, cysteine 319, cysteine 350, and glutamate 357.

This sequence belongs to the IspG family. It depends on [4Fe-4S] cluster as a cofactor.

It carries out the reaction (2E)-4-hydroxy-3-methylbut-2-enyl diphosphate + 2 oxidized [2Fe-2S]-[ferredoxin] + H2O = 2-C-methyl-D-erythritol 2,4-cyclic diphosphate + 2 reduced [2Fe-2S]-[ferredoxin] + H(+). It participates in isoprenoid biosynthesis; isopentenyl diphosphate biosynthesis via DXP pathway; isopentenyl diphosphate from 1-deoxy-D-xylulose 5-phosphate: step 5/6. Its function is as follows. Converts 2C-methyl-D-erythritol 2,4-cyclodiphosphate (ME-2,4cPP) into 1-hydroxy-2-methyl-2-(E)-butenyl 4-diphosphate. The polypeptide is 4-hydroxy-3-methylbut-2-en-1-yl diphosphate synthase (ferredoxin) (Prochlorococcus marinus (strain SARG / CCMP1375 / SS120)).